A 392-amino-acid polypeptide reads, in one-letter code: O-phospho-L-seryl-tRNA:Cys-tRNA synthase 1 (392 aa).

Pyridoxal 5'-phosphate-binding positions include alanine 85–arginine 86, asparagine 190, and serine 213–histidine 215. Lysine 216 bears the N6-(pyridoxal phosphate)lysine mark.

It belongs to the SepCysS family. In terms of assembly, homodimer. Interacts with SepRS. The cofactor is pyridoxal 5'-phosphate.

The enzyme catalyses O-phospho-L-seryl-tRNA(Cys) + hydrogen sulfide + H(+) = L-cysteinyl-tRNA(Cys) + phosphate. In terms of biological role, converts O-phospho-L-seryl-tRNA(Cys) (Sep-tRNA(Cys)) to L-cysteinyl-tRNA(Cys) (Cys-tRNA(Cys)). This is O-phospho-L-seryl-tRNA:Cys-tRNA synthase 1 from Methanocorpusculum labreanum (strain ATCC 43576 / DSM 4855 / Z).